The chain runs to 366 residues: Mannonate dehydratase (366 aa).

Belongs to the mannonate dehydratase family. Fe(2+) is required as a cofactor. Mn(2+) serves as cofactor.

It carries out the reaction D-mannonate = 2-dehydro-3-deoxy-D-gluconate + H2O. The protein operates within carbohydrate metabolism; pentose and glucuronate interconversion. Its function is as follows. Catalyzes the dehydration of D-mannonate. The polypeptide is Mannonate dehydratase (Streptococcus pneumoniae (strain 70585)).